The sequence spans 301 residues: Probable alpha-L-glutamate ligase (301 aa).

Residues 104-287 (LQLLSRKGIG…VAGLIYEFIE (184 aa)) enclose the ATP-grasp domain. Residues Lys-141, 178–179 (EF), Asp-187, and 211–213 (RSN) contribute to the ATP site. Residues Asp-248, Glu-260, and Asn-262 each coordinate Mg(2+). Mn(2+)-binding residues include Asp-248, Glu-260, and Asn-262.

The protein belongs to the RimK family. Mg(2+) serves as cofactor. It depends on Mn(2+) as a cofactor.

This chain is Probable alpha-L-glutamate ligase, found in Shewanella loihica (strain ATCC BAA-1088 / PV-4).